Reading from the N-terminus, the 801-residue chain is Bromodomain-containing protein 2 (801 aa).

At methionine 1 the chain carries N-acetylmethionine. Threonine 6 is subject to Phosphothreonine. Phosphoserine is present on serine 37. A disordered region spans residues 53–73 (ALQLTPANPPPPEVSNPKKPG). In terms of domain architecture, Bromo 1 spans 74 to 180 (RVTNQLQYLH…KIFLQKVASM (107 aa)). The a protein site is built by aspartate 112, tyrosine 155, asparagine 156, lysine 157, aspartate 160, and aspartate 161. 3 disordered regions span residues 268 to 349 (PPAQ…LSEQ), 456 to 647 (EPLE…YDEK), and 737 to 801 (EKRL…SDSG). A compositionally biased stretch (low complexity) spans 285–298 (TTTPTPTAILAPGS). Phosphoserine occurs at positions 298, 301, and 305. Over residues 316–332 (MRRESGRPIKPPRKDLP) the composition is skewed to basic and acidic residues. The 110-residue stretch at 344–453 (GKLSEQLKHC…DVFEFRYAKM (110 aa)) folds into the Bromo 2 domain. Over residues 481-514 (SSEESSSESSSEEEEEEDEEDEEEEESESSDSEE) the composition is skewed to acidic residues. The segment covering 544–566 (KPKRKREKKEKKKKRKAEKHRGR) has biased composition (basic residues). Positions 555-559 (KKKRK) match the Nuclear localization signal motif. The segment covering 592 to 612 (GSGGGSAALGPSGFGPSGGSG) has biased composition (gly residues). Residues 632–714 (DSEEEEESRP…SCLRKKPRKP (83 aa)) enclose the NET domain. Serine 633 carries the phosphoserine modification. Positions 763–795 (SSSAQQVAVSRLSASSSSSDSSSSSSSSSSSDT) are enriched in low complexity.

This sequence belongs to the BET family. Homodimer. Interacts with E2F1. Interacts with (acetylated) STAT3; promoting STAT3 recruitment to chromatin. Interacts with CTCF; promoting BRD2 recruitment to chromatin. As to quaternary structure, (Microbial infection) Interacts with herpes virus 8 protein LANA1.

It localises to the nucleus. Its subcellular location is the chromosome. With respect to regulation, inhibited by JQ1, a thieno-triazolo-1,4-diazepine derivative, which specifically inhibits members of the BET family (BRD2, BRD3 and BRD4). The first bromo domain is inhibited by GSK778 (iBET-BD1), which specifically inhibits the first bromo domain of members of the BET family (BRD2, BRD3 and BRD4). The second bromo domain is inhibited by ABBV-744, which specifically inhibits the second bromo domain of members of the BET family (BRD2, BRD3 and BRD4). The second bromo domain is inhibited by GSK046 (iBET-BD2), which specifically inhibits the second bromo domain of members of the BET family (BRD2, BRD3 and BRD4). Its function is as follows. Chromatin reader protein that specifically recognizes and binds histone H4 acetylated at 'Lys-5' and 'Lys-12' (H4K5ac and H4K12ac, respectively), thereby controlling gene expression and remodeling chromatin structures. Recruits transcription factors and coactivators to target gene sites, and activates RNA polymerase II machinery for transcriptional elongation. Plays a key role in genome compartmentalization via its association with CTCF and cohesin: recruited to chromatin by CTCF and promotes formation of topologically associating domains (TADs) via its ability to bind acetylated histones, contributing to CTCF boundary formation and enhancer insulation. Also recognizes and binds acetylated non-histone proteins, such as STAT3. Involved in inflammatory response by regulating differentiation of naive CD4(+) T-cells into T-helper Th17: recognizes and binds STAT3 acetylated at 'Lys-87', promoting STAT3 recruitment to chromatin. In addition to acetylated lysines, also recognizes and binds lysine residues on histones that are both methylated and acetylated on the same side chain to form N6-acetyl-N6-methyllysine (Kacme), an epigenetic mark of active chromatin associated with increased transcriptional initiation. Specifically binds histone H4 acetyl-methylated at 'Lys-5' and 'Lys-12' (H4K5acme and H4K12acme, respectively). This is Bromodomain-containing protein 2 from Homo sapiens (Human).